The following is a 301-amino-acid chain: Probable alpha-L-glutamate ligase (301 aa).

The 184-residue stretch at 104–287 folds into the ATP-grasp domain; it reads LQLLSRRGIG…VAGMIIEHLE (184 aa). ATP is bound by residues Lys-141, 178-179, Asp-187, and 211-213; these read EY and RSN. Residues Asp-248, Glu-260, and Asn-262 each coordinate Mg(2+). Residues Asp-248, Glu-260, and Asn-262 each contribute to the Mn(2+) site.

It belongs to the RimK family. It depends on Mg(2+) as a cofactor. The cofactor is Mn(2+).

The sequence is that of Probable alpha-L-glutamate ligase from Pseudomonas putida (strain W619).